The sequence spans 238 residues: MRPAGRSNNQVRPVTLTRNYTKHAEGSVLVEFGDTKVLCTASIEEGVPRFLKGQGQGWITAEYGMLPRSTHTRNAREAAKGKQGGRTMEIQRLIARALRAAVDLKALGEFTITLDCDVLQADGGTRTASITGACVALADALQKLVENGKLKTNPMKGMVAAVSVGIVNGEAICDLEYVEDSAAETDMNVVMTEDGRIIEVQGTAEGEPFTHEELLTLLALARGGIESIVATQKAALAN.

Phosphate contacts are provided by residues Arg86 and 124-126 (GTR).

The protein belongs to the RNase PH family. In terms of assembly, homohexameric ring arranged as a trimer of dimers.

The catalysed reaction is tRNA(n+1) + phosphate = tRNA(n) + a ribonucleoside 5'-diphosphate. Phosphorolytic 3'-5' exoribonuclease that plays an important role in tRNA 3'-end maturation. Removes nucleotide residues following the 3'-CCA terminus of tRNAs; can also add nucleotides to the ends of RNA molecules by using nucleoside diphosphates as substrates, but this may not be physiologically important. Probably plays a role in initiation of 16S rRNA degradation (leading to ribosome degradation) during starvation. The protein is Ribonuclease PH of Shigella flexneri serotype 5b (strain 8401).